Reading from the N-terminus, the 320-residue chain is ATP-dependent 6-phosphofructokinase (320 aa).

G12 contributes to the ATP binding site. Residues 22 to 26 (RGVVR) and 55 to 60 (RYSVSD) each bind ADP. Residues 73–74 (RF) and 103–106 (GDGS) contribute to the ATP site. D104 provides a ligand contact to Mg(2+). Residue 126–128 (TID) participates in substrate binding. D128 (proton acceptor) is an active-site residue. Residue R155 coordinates ADP. Residues R163 and 170 to 172 (MGR) each bind substrate. ADP contacts are provided by residues 186-188 (GCE), K212, and 214-216 (KKH). Substrate-binding positions include E223, R244, and 250–253 (HIQR).

This sequence belongs to the phosphofructokinase type A (PFKA) family. ATP-dependent PFK group I subfamily. Prokaryotic clade 'B1' sub-subfamily. As to quaternary structure, homotetramer. Mg(2+) is required as a cofactor.

The protein localises to the cytoplasm. The enzyme catalyses beta-D-fructose 6-phosphate + ATP = beta-D-fructose 1,6-bisphosphate + ADP + H(+). It functions in the pathway carbohydrate degradation; glycolysis; D-glyceraldehyde 3-phosphate and glycerone phosphate from D-glucose: step 3/4. With respect to regulation, allosterically activated by ADP and other diphosphonucleosides, and allosterically inhibited by phosphoenolpyruvate. Its function is as follows. Catalyzes the phosphorylation of D-fructose 6-phosphate to fructose 1,6-bisphosphate by ATP, the first committing step of glycolysis. This Buchnera aphidicola subsp. Baizongia pistaciae (strain Bp) protein is ATP-dependent 6-phosphofructokinase.